Here is an 88-residue protein sequence, read N- to C-terminus: Small ribosomal subunit protein bS16 (88 aa).

It belongs to the bacterial ribosomal protein bS16 family.

This Thermus aquaticus protein is Small ribosomal subunit protein bS16.